The following is a 254-amino-acid chain: Small ribosomal subunit protein uS2 (254 aa).

The protein belongs to the universal ribosomal protein uS2 family.

This chain is Small ribosomal subunit protein uS2, found in Legionella pneumophila (strain Lens).